Consider the following 429-residue polypeptide: Glutamate-1-semialdehyde 2,1-aminomutase (429 aa).

K265 is modified (N6-(pyridoxal phosphate)lysine).

This sequence belongs to the class-III pyridoxal-phosphate-dependent aminotransferase family. HemL subfamily. As to quaternary structure, homodimer. Pyridoxal 5'-phosphate serves as cofactor.

Its subcellular location is the cytoplasm. It carries out the reaction (S)-4-amino-5-oxopentanoate = 5-aminolevulinate. Its pathway is porphyrin-containing compound metabolism; protoporphyrin-IX biosynthesis; 5-aminolevulinate from L-glutamyl-tRNA(Glu): step 2/2. This chain is Glutamate-1-semialdehyde 2,1-aminomutase, found in Ectopseudomonas mendocina (strain ymp) (Pseudomonas mendocina).